The following is a 178-amino-acid chain: Interleukin-10 (178 aa).

The signal sequence occupies residues 1-18 (MHSSALLCCLVFLAGVAA). Cystine bridges form between C30/C126 and C80/C132. The N-linked (GlcNAc...) asparagine glycan is linked to N134.

Belongs to the IL-10 family. In terms of assembly, homodimer. Interacts with IL10RA and IL10RB.

The protein resides in the secreted. In terms of biological role, major immune regulatory cytokine that acts on many cells of the immune system where it has profound anti-inflammatory functions, limiting excessive tissue disruption caused by inflammation. Mechanistically, IL10 binds to its heterotetrameric receptor comprising IL10RA and IL10RB leading to JAK1 and STAT2-mediated phosphorylation of STAT3. In turn, STAT3 translocates to the nucleus where it drives expression of anti-inflammatory mediators. Targets antigen-presenting cells (APCs) such as macrophages and monocytes and inhibits their release of pro-inflammatory cytokines including granulocyte-macrophage colony-stimulating factor /GM-CSF, granulocyte colony-stimulating factor/G-CSF, IL-1 alpha, IL-1 beta, IL-6, IL-8 and TNF-alpha. Also interferes with antigen presentation by reducing the expression of MHC-class II and co-stimulatory molecules, thereby inhibiting their ability to induce T cell activation. In addition, controls the inflammatory response of macrophages by reprogramming essential metabolic pathways including mTOR signaling. This is Interleukin-10 (IL10) from Bos taurus (Bovine).